We begin with the raw amino-acid sequence, 394 residues long: Quinolinate synthase (394 aa).

Residues His-57 and Ser-74 each coordinate iminosuccinate. Cys-121 provides a ligand contact to [4Fe-4S] cluster. Residues 153-155 (YMN) and Ser-174 each bind iminosuccinate. Cys-243 contributes to the [4Fe-4S] cluster binding site. Iminosuccinate-binding positions include 269-271 (HPE) and Thr-286. Cys-333 provides a ligand contact to [4Fe-4S] cluster.

The protein belongs to the quinolinate synthase family. Type 3 subfamily. Requires [4Fe-4S] cluster as cofactor.

Its subcellular location is the cytoplasm. It carries out the reaction iminosuccinate + dihydroxyacetone phosphate = quinolinate + phosphate + 2 H2O + H(+). It functions in the pathway cofactor biosynthesis; NAD(+) biosynthesis; quinolinate from iminoaspartate: step 1/1. Functionally, catalyzes the condensation of iminoaspartate with dihydroxyacetone phosphate to form quinolinate. This is Quinolinate synthase from Corynebacterium glutamicum (strain ATCC 13032 / DSM 20300 / JCM 1318 / BCRC 11384 / CCUG 27702 / LMG 3730 / NBRC 12168 / NCIMB 10025 / NRRL B-2784 / 534).